Consider the following 423-residue polypeptide: Serine/threonine-protein kinase ppk25 (423 aa).

2 positions are modified to phosphoserine: serine 36 and serine 38. In terms of domain architecture, Protein kinase spans 53-305 (WIIKKTIGAG…LEQAAKFPWL (253 aa)). ATP is bound by residues 59–67 (IGAGSMGKV) and lysine 82. Residue aspartate 175 is the Proton acceptor of the active site.

This sequence belongs to the protein kinase superfamily. Ser/Thr protein kinase family.

The protein localises to the cytoplasm. The catalysed reaction is L-seryl-[protein] + ATP = O-phospho-L-seryl-[protein] + ADP + H(+). It carries out the reaction L-threonyl-[protein] + ATP = O-phospho-L-threonyl-[protein] + ADP + H(+). This is Serine/threonine-protein kinase ppk25 (ppk25) from Schizosaccharomyces pombe (strain 972 / ATCC 24843) (Fission yeast).